Consider the following 477-residue polypeptide: Protoporphyrinogen oxidase (477 aa).

FAD contacts are provided by residues 9–14, Trp42, 57–60, Val257, Ala449, and 454–456; these read GGGISG, GPRG, and VAV.

This sequence belongs to the protoporphyrinogen/coproporphyrinogen oxidase family. Protoporphyrinogen oxidase subfamily. In terms of assembly, monomer. Homodimer. The cofactor is FAD.

The protein resides in the mitochondrion inner membrane. The catalysed reaction is protoporphyrinogen IX + 3 O2 = protoporphyrin IX + 3 H2O2. Its pathway is porphyrin-containing compound metabolism; protoporphyrin-IX biosynthesis; protoporphyrin-IX from protoporphyrinogen-IX: step 1/1. In terms of biological role, catalyzes the 6-electron oxidation of protoporphyrinogen-IX to form protoporphyrin-IX. The protein is Protoporphyrinogen oxidase (PPOX) of Macaca fascicularis (Crab-eating macaque).